Reading from the N-terminus, the 156-residue chain is Small ribosomal subunit protein uS7 (156 aa).

It belongs to the universal ribosomal protein uS7 family. As to quaternary structure, part of the 30S ribosomal subunit. Contacts proteins S9 and S11.

Functionally, one of the primary rRNA binding proteins, it binds directly to 16S rRNA where it nucleates assembly of the head domain of the 30S subunit. Is located at the subunit interface close to the decoding center, probably blocks exit of the E-site tRNA. The chain is Small ribosomal subunit protein uS7 from Bartonella tribocorum (strain CIP 105476 / IBS 506).